Here is a 688-residue protein sequence, read N- to C-terminus: G-protein coupled receptor-associated protein LMBRD2 (688 aa).

Residues methionine 1 to glycine 3 are Extracellular-facing. A helical membrane pass occupies residues alanine 4–leucine 21. Residues histidine 22–arginine 32 lie on the Cytoplasmic side of the membrane. Residues leucine 33–proline 53 traverse the membrane as a helical segment. At leucine 54–glycine 99 the chain is on the extracellular side. The N-linked (GlcNAc...) asparagine glycan is linked to asparagine 76. Residues isoleucine 100–leucine 120 traverse the membrane as a helical segment. Residues proline 121–glutamate 144 are Cytoplasmic-facing. The helical transmembrane segment at asparagine 145–valine 165 threads the bilayer. Topologically, residues asparagine 166–glycine 180 are extracellular. Residues isoleucine 181–valine 201 traverse the membrane as a helical segment. Residues glutamate 202–arginine 381 lie on the Cytoplasmic side of the membrane. Residues phenylalanine 222 to tyrosine 254 are a coiled coil. A helical transmembrane segment spans residues valine 382 to phenylalanine 402. Topologically, residues serine 403–tyrosine 426 are extracellular. A helical transmembrane segment spans residues isoleucine 427–phenylalanine 447. Over arginine 448–serine 467 the chain is Cytoplasmic. A helical membrane pass occupies residues leucine 468 to glycine 488. The Extracellular segment spans residues leucine 489 to valine 515. A helical transmembrane segment spans residues leucine 516–isoleucine 536. At alanine 537–valine 688 the chain is on the cytoplasmic side. The segment covering arginine 600 to serine 617 has biased composition (basic and acidic residues). Residues arginine 600 to glycine 673 are disordered. The segment covering phenylalanine 618–asparagine 634 has biased composition (polar residues). The segment covering glycine 635 to leucine 644 has biased composition (basic and acidic residues).

Belongs to the LIMR family.

It is found in the cell membrane. In terms of biological role, may associate with G-protein coupled receptors and regulate downstream signaling pathways. The chain is G-protein coupled receptor-associated protein LMBRD2 from Gallus gallus (Chicken).